A 354-amino-acid polypeptide reads, in one-letter code: Rhodopsin (354 aa).

The Extracellular segment spans residues 1 to 36; it reads MNGTEGPNFYIPMSNKTGVVRSPFEYPQYYLAEPWK. 2 N-linked (GlcNAc...) asparagine glycosylation sites follow: Asn-2 and Asn-15. Residues 37–61 form a helical membrane-spanning segment; the sequence is YSILAAYMFLLILLGFPINFMTLYV. Residues 62 to 73 are Cytoplasmic-facing; sequence TIQHKKLRTPLN. A helical transmembrane segment spans residues 74–96; it reads YILLNLAFANHFMVLCGFTITLY. Residues 97–110 are Extracellular-facing; it reads TSLHGYFVFGQSGC. Cys-110 and Cys-187 form a disulfide bridge. The chain crosses the membrane as a helical span at residues 111 to 133; the sequence is YFEGFFATLGGEIALWSLVALAI. A 'Ionic lock' involved in activated form stabilization motif is present at residues 134 to 136; it reads ERY. At 134-152 the chain is on the cytoplasmic side; the sequence is ERYIVVCKPMSNFRFGENH. Residues 153 to 173 form a helical membrane-spanning segment; it reads AMMGVAFTWIMALACAVPPLF. At 174–202 the chain is on the extracellular side; sequence GWSRYIPEGMQCSCGVDYYTLKPEINNES. The helical transmembrane segment at 203–224 threads the bilayer; it reads FVIYMFVVHFLIPLIIITFCYG. The Cytoplasmic portion of the chain corresponds to 225–252; that stretch reads RLVCTVKEAAAQQQESATTQKAEKEVTR. The helical transmembrane segment at 253–274 threads the bilayer; the sequence is MVIIMVIFFLICWVPYAYVAFY. At 275-286 the chain is on the extracellular side; that stretch reads IFCNQGSEFGPI. Residues 287-308 traverse the membrane as a helical segment; it reads FMTVPAFFAKSSAIYNPVIYIM. Residue Lys-296 is modified to N6-(retinylidene)lysine. The Cytoplasmic segment spans residues 309–354; the sequence is LNKQFRNCMITTLCCGKNPFGDDDASSAATSKTEATSVSTSQVSPA. Residues Cys-322 and Cys-323 are each lipidated (S-palmitoyl cysteine). A disordered region spans residues 332-354; it reads DASSAATSKTEATSVSTSQVSPA. A compositionally biased stretch (low complexity) spans 334 to 354; sequence SSAATSKTEATSVSTSQVSPA.

This sequence belongs to the G-protein coupled receptor 1 family. Opsin subfamily. In terms of processing, contains one covalently linked retinal chromophore. Upon light absorption, the covalently bound 11-cis-retinal is converted to all-trans-retinal. After hydrolysis of the Schiff base and release of the covalently bound all-trans-retinal, active rhodopsin is regenerated by binding of a fresh molecule of 11-cis-retinal.

It localises to the membrane. The protein resides in the cell projection. The protein localises to the cilium. Its subcellular location is the photoreceptor outer segment. Photoreceptor required for image-forming vision at low light intensity. Required for photoreceptor cell viability after birth. Light-induced isomerization of 11-cis to all-trans retinal triggers a conformational change that activates signaling via G-proteins. Subsequent receptor phosphorylation mediates displacement of the bound G-protein alpha subunit by arrestin and terminates signaling. The polypeptide is Rhodopsin (RHO) (Rana temporaria (European common frog)).